Here is a 159-residue protein sequence, read N- to C-terminus: Globin-like protein (159 aa).

Residues 1–152 (MSMNRQEISD…FNAESQTHLK (152 aa)) form the Globin domain. Residue H101 participates in heme binding.

Belongs to the globin family. In terms of assembly, homodimer. As to expression, expressed mainly in a subset of neuronal cells and in head muscular tissue.

Its subcellular location is the cytoplasm. May be a globin and may play a role in oxygen transport. This chain is Globin-like protein (glb-1), found in Caenorhabditis elegans.